Here is a 199-residue protein sequence, read N- to C-terminus: Putative pseudouridine methyltransferase (199 aa).

S-adenosyl-L-methionine contacts are provided by L132 and C186.

Belongs to the methyltransferase superfamily. TrmY family.

The protein resides in the cytoplasm. The sequence is that of Putative pseudouridine methyltransferase from Vibrio parahaemolyticus serotype O3:K6 (strain RIMD 2210633).